A 417-amino-acid chain; its full sequence is Cyanophycinase (417 aa).

The first 23 residues, 1–23, serve as a signal peptide directing secretion; that stretch reads MIRSFIRSSALLLALLPVTGYSA. Active-site charge relay system residues include S169, D188, and H222.

It belongs to the peptidase S51 family.

It localises to the secreted. The catalysed reaction is [L-4-(L-arginin-2-N-yl)aspartate](n) + H2O = [L-4-(L-arginin-2-N-yl)aspartate](n-1) + L-4-(L-arginin-2-N-yl)aspartate. Inhibited by serine protease inhibitors. Inhibited by N-Bromo-succinimide. Functionally, exopeptidase that catalyzes the hydrolytic cleavage of multi-L-arginyl-poly-L-aspartic acid (cyanophycin; a water-insoluble reserve polymer) into aspartate-arginine dipeptides. This chain is Cyanophycinase (cphE), found in Pseudomonas anguilliseptica.